Consider the following 45-residue polypeptide: Pollen allergen Amb a 5 (45 aa).

Disulfide bonds link Cys-4–Cys-39, Cys-11–Cys-26, Cys-18–Cys-32, and Cys-19–Cys-43.

In terms of assembly, monomer.

The sequence is that of Pollen allergen Amb a 5 from Ambrosia artemisiifolia var. elatior (Short ragweed).